The sequence spans 310 residues: tRNA-cytidine(32) 2-sulfurtransferase (310 aa).

Positions 48 to 53 match the PP-loop motif motif; sequence SGGKDS. 3 residues coordinate [4Fe-4S] cluster: cysteine 123, cysteine 126, and cysteine 214.

It belongs to the TtcA family. In terms of assembly, homodimer. It depends on Mg(2+) as a cofactor. The cofactor is [4Fe-4S] cluster.

It is found in the cytoplasm. The enzyme catalyses cytidine(32) in tRNA + S-sulfanyl-L-cysteinyl-[cysteine desulfurase] + AH2 + ATP = 2-thiocytidine(32) in tRNA + L-cysteinyl-[cysteine desulfurase] + A + AMP + diphosphate + H(+). It functions in the pathway tRNA modification. In terms of biological role, catalyzes the ATP-dependent 2-thiolation of cytidine in position 32 of tRNA, to form 2-thiocytidine (s(2)C32). The sulfur atoms are provided by the cysteine/cysteine desulfurase (IscS) system. The polypeptide is tRNA-cytidine(32) 2-sulfurtransferase (Vibrio cholerae serotype O1 (strain ATCC 39315 / El Tor Inaba N16961)).